The following is a 205-amino-acid chain: Probable thymidylate kinase (205 aa).

10–17 (GIDGSGKS) serves as a coordination point for ATP.

Belongs to the thymidylate kinase family.

The catalysed reaction is dTMP + ATP = dTDP + ADP. This chain is Probable thymidylate kinase, found in Methanosarcina barkeri (strain Fusaro / DSM 804).